The following is a 147-amino-acid chain: Large-conductance mechanosensitive channel (147 aa).

A run of 2 helical transmembrane segments spans residues 8–28 (FIMK…AAFG) and 81–101 (GIFL…FMII).

It belongs to the MscL family. In terms of assembly, homopentamer.

The protein localises to the cell inner membrane. Functionally, channel that opens in response to stretch forces in the membrane lipid bilayer. May participate in the regulation of osmotic pressure changes within the cell. The chain is Large-conductance mechanosensitive channel from Trichlorobacter lovleyi (strain ATCC BAA-1151 / DSM 17278 / SZ) (Geobacter lovleyi).